Here is a 467-residue protein sequence, read N- to C-terminus: F-box only protein 6 (467 aa).

An F-box domain is found at 114 to 163 (QEIWQEFPQDLFEDVVSRLPMATFFQFRAVCRKWNALIDSDSFSRCFTEL). Kelch repeat units follow at residues 163–211 (LPQT…MASA), 252–305 (GMTL…NFKS), and 406–456 (CLGN…IACG).

The chain is F-box only protein 6 (FBX6) from Arabidopsis thaliana (Mouse-ear cress).